Here is a 931-residue protein sequence, read N- to C-terminus: MAEYKDTLNLPNTSFPMKASLSVREPEMLADWQAKGIYQKIRKARVGSKRFILHDGPPYANGHLHCGHALNKILKDIIIKSKTFSGFDAPFVPGWDCHGLPIELNVEKKVGKAGSKISPREFRAKCREYAASQIDIQRDEFQRLGVLGDWYNPYVTMDYHYEANIVRALGLMIKNGHLQQGFKPVHWCIDCGSALAEAEVDYEDKTSPSIDVAFSAVNPSEFLNCFETQPAVKPLILPIWTTTPWTLPANEAVCLHPEIDYALIDAGNSYYIVATDLVESVMARYGISHYKTSGSAKGRVFEHFKLQHPFYKRQVPVVLAEHVTTESGTGCVHTAPAHGPDDYLVGQSYQLPLINPVMANGCFAENVELFAGISVLKANETILAVLSERNVLLASESIRHSYPHCWRHKSPMIFLATPQWFISMDKSNLRQAIINEIDKVNWVPDWGKARISNMVENRPDWCISRQRSWGTPMPLFVHKTTRELHPDTLELIERVAVMIEKSGIDAWFDLDSSELLGDDAKHYDKITDTMDVWLDSGISHYSVLKHNNDLDFPADVYFEGSDQHRGWFNSSLTTAVAMYGVAPYKTVLTHGYTVDAEGKKLSKSKGNYVALDKLVNQHGADILRLWVASTDYRHEVSISEEIIKRNADAYRRIRNTARFLLANLFDFNPASDCIEAKELLELDRWALKRCQLLQEEIITAYENYHFHLIYQKIHNFCAVDMGSFYLDLIKDRQYTTAKDSIARRSCQTAMYHMVKAFTIWLAPILSFTAEEIWQTIPGNNSESIFIEHWYDAWPIIDAVNMEDWEQLHIVRDEVNKALEETRQRGEIGSALAAEVTVYADAKALPKLTRLGEELRFLFITSEAKACPISQSPKGLAVTDCGVSIQVTASAHEKCARCWHRREDVGQNQEHPELCLRCVGNISGYHEERLYI.

The short motif at 58-68 (PYANGHLHCGH) is the 'HIGH' region element. Glu-559 lines the L-isoleucyl-5'-AMP pocket. The short motif at 600–604 (KLSKS) is the 'KMSKS' region element. Lys-603 is a binding site for ATP. Zn(2+)-binding residues include Cys-894, Cys-897, Cys-914, and Cys-917.

It belongs to the class-I aminoacyl-tRNA synthetase family. IleS type 1 subfamily. In terms of assembly, monomer. It depends on Zn(2+) as a cofactor.

Its subcellular location is the cytoplasm. It catalyses the reaction tRNA(Ile) + L-isoleucine + ATP = L-isoleucyl-tRNA(Ile) + AMP + diphosphate. Its function is as follows. Catalyzes the attachment of isoleucine to tRNA(Ile). As IleRS can inadvertently accommodate and process structurally similar amino acids such as valine, to avoid such errors it has two additional distinct tRNA(Ile)-dependent editing activities. One activity is designated as 'pretransfer' editing and involves the hydrolysis of activated Val-AMP. The other activity is designated 'posttransfer' editing and involves deacylation of mischarged Val-tRNA(Ile). The polypeptide is Isoleucine--tRNA ligase (Legionella pneumophila (strain Paris)).